The following is a 151-amino-acid chain: MDNKDNRKFYLIREDVLPESVIKTLKVKDALKNNSNLSIYDAVKQFNLSRSAFYKYRETIFPVDEKILDQREFTLILYVNDIVGMLAQVLNAISQLQLSVLTIHQSVPIEDKATITLSLNARNSNLSIDEVIESLREINHVTKVDLISMTM.

The region spanning 74-149 is the ACT domain; sequence TLILYVNDIV…HVTKVDLISM (76 aa).

It belongs to the UPF0735 family.

The sequence is that of UPF0735 ACT domain-containing protein SERP1207 from Staphylococcus epidermidis (strain ATCC 35984 / DSM 28319 / BCRC 17069 / CCUG 31568 / BM 3577 / RP62A).